The chain runs to 512 residues: Nephrocan (512 aa).

The signal sequence occupies residues 1–19 (MHPLWAFLLGLSLTNGLSA). The 25-residue stretch at 20–44 (NCPGRCSCDSMQSVQCYRLMELPSG) folds into the LRRNT domain. LRR repeat units follow at residues 45–69 (IPST…NFTG), 71–93 (LALE…TFKT), 94–117 (LSTL…LPAN), 119–138 (EVLK…EFEG), 139–162 (LKNL…MLSP), 164–185 (ASLQ…PLSL), 186–208 (PHLK…VFTS), 210–232 (QNLQ…LPKS), 234–253 (LSLK…DMKH), 254–276 (LENL…AQQL), 277–299 (TNLT…LPSR), 301–320 (QKLD…EFQD), 321–344 (LRDL…ALQR), 346–371 (SQLS…TLAR), 373–389 (DLKG…ELRD), 390–413 (LKQL…ALEG), and 415–442 (PRLR…VLKA). The N-linked (GlcNAc...) asparagine glycan is linked to Asn-66. Basic and acidic residues predominate over residues 474–484 (EHHLQQSEKSK). Positions 474 to 512 (EHHLQQSEKSKETKKKPKPEDSSSIRLNMDDDDDDYEID) are disordered. Positions 503 to 512 (DDDDDDYEID) are enriched in acidic residues.

The protein belongs to the small leucine-rich proteoglycan (SLRP) family. N-glycosylated. As to expression, expressed at highest levels in the kidney, where it is primarily detected in the epithelial cells of distal tubules and collecting ducts, and more weakly in proximal epithelial cells. Expressed at lower levels in heart and lung (at protein level). Detected in skeletal muscle.

Its subcellular location is the secreted. May inhibit TGF-beta signaling. This is Nephrocan from Mus musculus (Mouse).